Here is a 595-residue protein sequence, read N- to C-terminus: Probable xyloglucan glycosyltransferase 9 (595 aa).

2 helical membrane passes run 30 to 50 and 77 to 97; these read AFVV…INGW and ATYV…LFLI. The active site involves aspartate 177. Residues aspartate 236 and aspartate 238 each coordinate substrate. Aspartate 330 is a catalytic residue. 4 helical membrane-spanning segments follow: residues 408–428, 433–453, 545–564, and 570–590; these read LILP…TMFV, LPDW…ILPS, IYKK…ARSL, and IHFY…LDLI.

Belongs to the glycosyltransferase 2 family. Plant cellulose synthase-like C subfamily.

The protein resides in the golgi apparatus membrane. Functionally, probable beta-1,4-glucan synthase rather involved in the synthesis of the xyloglucan backbone than cellulose. Seems to work simultaneously with xyloglucan 6-xylosyltransferase. Xyloglucan is a noncellulosic polysaccharides of plant cell wall and consists of a glucan backbone substituted by xylose, galactose and fucose. The sequence is that of Probable xyloglucan glycosyltransferase 9 (CSLC9) from Oryza sativa subsp. japonica (Rice).